A 300-amino-acid chain; its full sequence is Protoheme IX farnesyltransferase (300 aa).

A run of 9 helical transmembrane segments spans residues Val28 to Leu48, Val50 to Leu70, Ala100 to Asn120, Leu122 to Leu142, Asn149 to Thr169, Ala176 to Ile196, Cys222 to Met242, Ser243 to Trp263, and Phe280 to Ala300.

It belongs to the UbiA prenyltransferase family. Protoheme IX farnesyltransferase subfamily.

It localises to the cell inner membrane. It carries out the reaction heme b + (2E,6E)-farnesyl diphosphate + H2O = Fe(II)-heme o + diphosphate. The protein operates within porphyrin-containing compound metabolism; heme O biosynthesis; heme O from protoheme: step 1/1. Its function is as follows. Converts heme B (protoheme IX) to heme O by substitution of the vinyl group on carbon 2 of heme B porphyrin ring with a hydroxyethyl farnesyl side group. This Shewanella oneidensis (strain ATCC 700550 / JCM 31522 / CIP 106686 / LMG 19005 / NCIMB 14063 / MR-1) protein is Protoheme IX farnesyltransferase.